A 347-amino-acid polypeptide reads, in one-letter code: Protease HtpX homolog (347 aa).

Transmembrane regions (helical) follow at residues 8 to 28 (VALGLYIVGYIFMLIIAATIA), 44 to 64 (AMALTAVLVVLTTAFIIYLFV), 76 to 96 (LSFLLGLIFFVVLMNIITYFA), and 141 to 163 (AFAYGNFLTGRYVAVTSSMLALT). Residue His-174 participates in Zn(2+) binding. Residue Glu-175 is part of the active site. His-178 is a binding site for Zn(2+). 2 helical membrane-spanning segments follow: residues 185–205 (AIMLLFGILPSIVYYLGVTAV) and 221–241 (ILAAVGIAAVIVSFLIQLLVL). Glu-248 is a binding site for Zn(2+).

The protein belongs to the peptidase M48B family. Zn(2+) is required as a cofactor.

The protein resides in the cell membrane. The sequence is that of Protease HtpX homolog from Pyrobaculum aerophilum (strain ATCC 51768 / DSM 7523 / JCM 9630 / CIP 104966 / NBRC 100827 / IM2).